Here is a 149-residue protein sequence, read N- to C-terminus: MQIWVDADACPKVVKEVLFRAATRTGIKLTLVANHYIPVPSAANIRSMQVEAGFDVADDEIVKRSEAGDLVISADIPLAAELIEKKVQVLNPRGELYTEATIKARLNIRDFMDTMRASGIQTGGPAPLSQTERREFANQLDRILAKAKI.

This sequence belongs to the UPF0178 family.

The chain is UPF0178 protein VFMJ11_0615 from Aliivibrio fischeri (strain MJ11) (Vibrio fischeri).